Reading from the N-terminus, the 294-residue chain is Lipoyl synthase (294 aa).

The [4Fe-4S] cluster site is built by Cys38, Cys43, Cys49, Cys64, Cys68, Cys71, and Ser277. The region spanning 50 to 266 is the Radical SAM core domain; it reads WSRGTATFLL…RSFAEGAGFR (217 aa).

Belongs to the radical SAM superfamily. Lipoyl synthase family. Requires [4Fe-4S] cluster as cofactor.

Its subcellular location is the cytoplasm. It carries out the reaction [[Fe-S] cluster scaffold protein carrying a second [4Fe-4S](2+) cluster] + N(6)-octanoyl-L-lysyl-[protein] + 2 oxidized [2Fe-2S]-[ferredoxin] + 2 S-adenosyl-L-methionine + 4 H(+) = [[Fe-S] cluster scaffold protein] + N(6)-[(R)-dihydrolipoyl]-L-lysyl-[protein] + 4 Fe(3+) + 2 hydrogen sulfide + 2 5'-deoxyadenosine + 2 L-methionine + 2 reduced [2Fe-2S]-[ferredoxin]. The protein operates within protein modification; protein lipoylation via endogenous pathway; protein N(6)-(lipoyl)lysine from octanoyl-[acyl-carrier-protein]: step 2/2. Catalyzes the radical-mediated insertion of two sulfur atoms into the C-6 and C-8 positions of the octanoyl moiety bound to the lipoyl domains of lipoate-dependent enzymes, thereby converting the octanoylated domains into lipoylated derivatives. The protein is Lipoyl synthase of Pelodictyon phaeoclathratiforme (strain DSM 5477 / BU-1).